We begin with the raw amino-acid sequence, 380 residues long: ATPase ASNA1 homolog (380 aa).

48–55 (KGGVGKTT) provides a ligand contact to ATP. Residue Asp77 is part of the active site. 2 residues coordinate ATP: Glu248 and Asn275.

Belongs to the arsA ATPase family. As to quaternary structure, homodimer.

The protein resides in the cytoplasm. It is found in the endoplasmic reticulum. Functionally, ATPase required for the post-translational delivery of tail-anchored (TA) proteins to the endoplasmic reticulum. Recognizes and selectively binds the transmembrane domain of TA proteins in the cytosol. This complex then targets to the endoplasmic reticulum by membrane-bound receptors, where the tail-anchored protein is released for insertion. This process is regulated by ATP binding and hydrolysis. ATP binding drives the homodimer towards the closed dimer state, facilitating recognition of newly synthesized TA membrane proteins. ATP hydrolysis is required for insertion. Subsequently, the homodimer reverts towards the open dimer state, lowering its affinity for the membrane-bound receptor, and returning it to the cytosol to initiate a new round of targeting. The polypeptide is ATPase ASNA1 homolog (Plasmodium yoelii yoelii).